The following is a 394-amino-acid chain: 1-deoxy-D-xylulose 5-phosphate reductoisomerase (394 aa).

NADPH contacts are provided by Thr-11, Gly-12, Ser-13, Ile-14, Gly-37, Asn-39, and Asn-126. Position 127 (Lys-127) interacts with 1-deoxy-D-xylulose 5-phosphate. Glu-128 lines the NADPH pocket. Position 152 (Asp-152) interacts with Mn(2+). 1-deoxy-D-xylulose 5-phosphate-binding residues include Ser-153, Glu-154, Ser-178, and His-201. Residue Glu-154 participates in Mn(2+) binding. Gly-207 provides a ligand contact to NADPH. 4 residues coordinate 1-deoxy-D-xylulose 5-phosphate: Ser-214, Asn-219, Lys-220, and Glu-223. Residue Glu-223 coordinates Mn(2+).

It belongs to the DXR family. Mg(2+) serves as cofactor. The cofactor is Mn(2+).

The catalysed reaction is 2-C-methyl-D-erythritol 4-phosphate + NADP(+) = 1-deoxy-D-xylulose 5-phosphate + NADPH + H(+). It participates in isoprenoid biosynthesis; isopentenyl diphosphate biosynthesis via DXP pathway; isopentenyl diphosphate from 1-deoxy-D-xylulose 5-phosphate: step 1/6. Functionally, catalyzes the NADPH-dependent rearrangement and reduction of 1-deoxy-D-xylulose-5-phosphate (DXP) to 2-C-methyl-D-erythritol 4-phosphate (MEP). The protein is 1-deoxy-D-xylulose 5-phosphate reductoisomerase of Synechocystis sp. (strain ATCC 27184 / PCC 6803 / Kazusa).